The sequence spans 143 residues: Transcriptional regulator MraZ (143 aa).

2 SpoVT-AbrB domains span residues 5–47 and 76–119; these read TYTP…PKEE and ADEQ…DAQA.

It belongs to the MraZ family. As to quaternary structure, forms oligomers.

Its subcellular location is the cytoplasm. It localises to the nucleoid. This chain is Transcriptional regulator MraZ, found in Corynebacterium efficiens (strain DSM 44549 / YS-314 / AJ 12310 / JCM 11189 / NBRC 100395).